A 439-amino-acid polypeptide reads, in one-letter code: Tryptophan synthase beta chain 2 (439 aa).

At Lys-99 the chain carries N6-(pyridoxal phosphate)lysine.

The protein belongs to the TrpB family. As to quaternary structure, tetramer of two alpha and two beta chains. Pyridoxal 5'-phosphate serves as cofactor.

It carries out the reaction (1S,2R)-1-C-(indol-3-yl)glycerol 3-phosphate + L-serine = D-glyceraldehyde 3-phosphate + L-tryptophan + H2O. The protein operates within amino-acid biosynthesis; L-tryptophan biosynthesis; L-tryptophan from chorismate: step 5/5. In terms of biological role, the beta subunit is responsible for the synthesis of L-tryptophan from indole and L-serine. This is Tryptophan synthase beta chain 2 (trpB2) from Corynebacterium efficiens (strain DSM 44549 / YS-314 / AJ 12310 / JCM 11189 / NBRC 100395).